Here is a 118-residue protein sequence, read N- to C-terminus: UPF0344 protein RBAM_010920 (118 aa).

The next 4 helical transmembrane spans lie at 4-24, 33-53, 62-82, and 93-113; these read WHIT…GLYG, ITHM…AELF, EYAG…MLVI, and LWIG…HLPI.

This sequence belongs to the UPF0344 family.

The protein resides in the cell membrane. The sequence is that of UPF0344 protein RBAM_010920 from Bacillus velezensis (strain DSM 23117 / BGSC 10A6 / LMG 26770 / FZB42) (Bacillus amyloliquefaciens subsp. plantarum).